A 325-amino-acid chain; its full sequence is NADH-quinone oxidoreductase subunit H (325 aa).

8 consecutive transmembrane segments (helical) span residues 11–31 (ILISVLKAVVILLVVVTCGAF), 81–101 (AIFTLAPVIAFTSLLLSFAIV), 114–134 (IGILFFLMMAGLAVYAVLFAG), 154–174 (LSYEVFLGLSLMGVVAQAGSF), 186–206 (VWNVIPQFFGFLTFAIAGVAV), 237–257 (FFVGEYIGIVTVSALIVTLFF), 265–285 (LPPFIWFALKTAFFMVMFILI), and 304–324 (VCLPLTLLNLLATAAVILYNA).

This sequence belongs to the complex I subunit 1 family. NDH-1 is composed of 13 different subunits. Subunits NuoA, H, J, K, L, M, N constitute the membrane sector of the complex.

Its subcellular location is the cell inner membrane. The enzyme catalyses a quinone + NADH + 5 H(+)(in) = a quinol + NAD(+) + 4 H(+)(out). Its function is as follows. NDH-1 shuttles electrons from NADH, via FMN and iron-sulfur (Fe-S) centers, to quinones in the respiratory chain. The immediate electron acceptor for the enzyme in this species is believed to be ubiquinone. Couples the redox reaction to proton translocation (for every two electrons transferred, four hydrogen ions are translocated across the cytoplasmic membrane), and thus conserves the redox energy in a proton gradient. This subunit may bind ubiquinone. This is NADH-quinone oxidoreductase subunit H from Yersinia pseudotuberculosis serotype O:1b (strain IP 31758).